The following is a 103-amino-acid chain: Matrix Gla protein (103 aa).

A signal peptide spans 1–19 (MKSLVLLAILAALAVVTLC). Position 21 is a 4-carboxyglutamate (Glu-21). Phosphoserine occurs at positions 22, 25, and 28. Positions 51–97 (RAKVQERIRERSKPVHELNREACDDYRLCERYAMVYGYNAAYNRYFR) constitute a Gla domain. 4 positions are modified to 4-carboxyglutamate: Glu-56, Glu-60, Glu-67, and Glu-71. An intrachain disulfide couples Cys-73 to Cys-79. A propeptide spans 97–103 (RERRGAK) (removed in mature form; probably by carboxypeptidase N).

Belongs to the osteocalcin/matrix Gla protein family. Requires vitamin K-dependent gamma-carboxylation for its function.

It localises to the secreted. In terms of biological role, associates with the organic matrix of bone and cartilage. Thought to act as an inhibitor of bone formation. This is Matrix Gla protein (MGP) from Pongo abelii (Sumatran orangutan).